Consider the following 432-residue polypeptide: Queuine tRNA-ribosyltransferase accessory subunit 2 (432 aa).

Zn(2+) is bound by residues C329, C331, C334, and H360. Positions 390–432 are disordered; the sequence is GQKSLPPYEPPKEEKLPMPAAQKAELMEPMEDLGEKQNKKQRA. Basic and acidic residues predominate over residues 422-432; that stretch reads LGEKQNKKQRA.

The protein belongs to the queuine tRNA-ribosyltransferase family. QTRT2 subfamily. In terms of assembly, heterodimer of a catalytic subunit and an accessory subunit. Zn(2+) is required as a cofactor.

The protein resides in the cytoplasm. In terms of biological role, non-catalytic subunit of the queuine tRNA-ribosyltransferase (TGT) that catalyzes the base-exchange of a guanine (G) residue with queuine (Q) at position 34 (anticodon wobble position) in tRNAs with GU(N) anticodons (tRNA-Asp, -Asn, -His and -Tyr), resulting in the hypermodified nucleoside queuosine (7-(((4,5-cis-dihydroxy-2-cyclopenten-1-yl)amino)methyl)-7-deazaguanosine). The protein is Queuine tRNA-ribosyltransferase accessory subunit 2 of Anopheles gambiae (African malaria mosquito).